We begin with the raw amino-acid sequence, 158 residues long: NAD(P)H-quinone oxidoreductase subunit J, chloroplastic (158 aa).

It belongs to the complex I 30 kDa subunit family. NDH is composed of at least 16 different subunits, 5 of which are encoded in the nucleus.

It is found in the plastid. The protein localises to the chloroplast thylakoid membrane. It catalyses the reaction a plastoquinone + NADH + (n+1) H(+)(in) = a plastoquinol + NAD(+) + n H(+)(out). It carries out the reaction a plastoquinone + NADPH + (n+1) H(+)(in) = a plastoquinol + NADP(+) + n H(+)(out). NDH shuttles electrons from NAD(P)H:plastoquinone, via FMN and iron-sulfur (Fe-S) centers, to quinones in the photosynthetic chain and possibly in a chloroplast respiratory chain. The immediate electron acceptor for the enzyme in this species is believed to be plastoquinone. Couples the redox reaction to proton translocation, and thus conserves the redox energy in a proton gradient. The sequence is that of NAD(P)H-quinone oxidoreductase subunit J, chloroplastic from Eucalyptus globulus subsp. globulus (Tasmanian blue gum).